Here is a 537-residue protein sequence, read N- to C-terminus: Frizzled-4 (537 aa).

A signal peptide spans 1-36; the sequence is MAWRGAGPSVPGAPGGVGLSLGLLLQLLLLLGPARG. Over 37-212 the chain is Extracellular; it reads FGDEEERRCD…KCGYDAGLYS (176 aa). The FZ domain maps to 40 to 161; it reads EEERRCDPIR…NDHNHMCMEG (122 aa). Disulfide bonds link Cys-45/Cys-106, Cys-53/Cys-99, Cys-90/Cys-128, Cys-117/Cys-158, Cys-121/Cys-145, Cys-181/Cys-200, Cys-204/Cys-282, and Cys-302/Cys-377. An N-linked (GlcNAc...) asparagine glycan is attached at Asn-59. N-linked (GlcNAc...) asparagine glycosylation occurs at Asn-144. The chain crosses the membrane as a helical span at residues 213–243; sequence RSAKEFTDIWMAVWASLCFISTAFTVLTFLI. Over 244–249 the chain is Cytoplasmic; the sequence is DSSRFS. A helical transmembrane segment spans residues 250–275; it reads YPERPIIFLSMCYNIYSIAYIVRLTV. Residues 276-299 lie on the Extracellular side of the membrane; it reads GRERISCDFEEAAEPVLIQEGLKN. The chain crosses the membrane as a helical span at residues 300–333; sequence TGCAIIFLLMYFFGMASSIWWVILTLTWFLAAGL. Residues 334-336 lie on the Cytoplasmic side of the membrane; that stretch reads KWG. The helical transmembrane segment at 337-365 threads the bilayer; that stretch reads HEAIEMHSSYFHIAAWAIPAVKTIVILIM. Residues 366 to 383 lie on the Extracellular side of the membrane; that stretch reads RLVDADELTGLCYVGNQN. The chain crosses the membrane as a helical span at residues 384 to 418; it reads LDALTGFVVAPLFTYLVIGTLFIAAGLVALFKIRS. The Cytoplasmic portion of the chain corresponds to 419-431; sequence NLQKDGTKTDKLE. The helical transmembrane segment at 432 to 460 threads the bilayer; it reads RLMVKIGVFSVLYTVPATCVIACYFYEIS. Topologically, residues 461 to 473 are extracellular; it reads NWALFRYSADDSN. Residues 474 to 495 form a helical membrane-spanning segment; that stretch reads MAVEMLKIFMSLLVGITSGMWI. Topologically, residues 496–537 are cytoplasmic; that stretch reads WSAKTLHTWQKCSNRLVNSGKVKREKRGNGWVKPGKGSETVV. The Lys-Thr-X-X-X-Trp motif, mediates interaction with the PDZ domain of Dvl family members motif lies at 499–504; that stretch reads KTLHTW. The PDZ-binding signature appears at 535-537; sequence TVV.

It belongs to the G-protein coupled receptor Fz/Smo family. Interacts with MAGI3 and NDP. Component of a complex, at least composed of TSPAN12, FZD4 and norrin (NDP). Interacts (via FZ domain) with TSKU; TSKU competes with WNT2B for binding to FZD4, inhibiting Wnt signaling and repressing peripheral eye development. Interacts with glypican GPC3. Post-translationally, ubiquitinated by ZNRF3, leading to its degradation by the proteasome. Almost ubiquitous. Largely expressed in adult heart, skeletal muscle, ovary, and fetal kidney. Moderate amounts in adult liver, kidney, pancreas, spleen, and fetal lung, and small amounts in placenta, adult lung, prostate, testis, colon, fetal brain and liver.

It is found in the cell membrane. Receptor for Wnt proteins. Most frizzled receptors are coupled to the beta-catenin (CTNNB1) canonical signaling pathway, which leads to the activation of disheveled proteins, inhibition of GSK-3 kinase, nuclear accumulation of beta-catenin (CTNNB1) and activation of Wnt target genes. Plays a critical role in retinal vascularization by acting as a receptor for Wnt proteins and norrin (NDP). In retina, it can be activated by Wnt protein-binding and also by Wnt-independent signaling via binding of norrin (NDP), promoting in both cases beta-catenin (CTNNB1) accumulation and stimulation of LEF/TCF-mediated transcriptional programs. A second signaling pathway involving PKC and calcium fluxes has been seen for some family members, but it is not yet clear if it represents a distinct pathway or if it can be integrated in the canonical pathway, as PKC seems to be required for Wnt-mediated inactivation of GSK-3 kinase. Both pathways seem to involve interactions with G-proteins. May be involved in transduction and intercellular transmission of polarity information during tissue morphogenesis and/or in differentiated tissues. In Homo sapiens (Human), this protein is Frizzled-4 (FZD4).